The primary structure comprises 1016 residues: UvrABC system protein A (1016 aa).

32–39 serves as a coordination point for ATP; sequence GVSGSGKS. Residues 259–286 form a C4-type zinc finger; the sequence is CPEHGSVLEELEPRSFSFNSPYGACGDC. 2 ABC transporter domains span residues 315-627 and 647-975; these read WTKK…KNSL and GNGK…EYLR. 679–686 serves as a coordination point for ATP; sequence GPSGSGKS. A C4-type zinc finger spans residues 778–804; that stretch reads CEHCKGDGVMKIEMNFLPDIYVPCEVC. Residues 984 to 1016 form a disordered region; sequence EPRARGEKAEKPAKAKAPAKKRTKKQTELVEAD. The span at 985–996 shows a compositional bias: basic and acidic residues; it reads PRARGEKAEKPA.

Belongs to the ABC transporter superfamily. UvrA family. In terms of assembly, forms a heterotetramer with UvrB during the search for lesions.

It is found in the cytoplasm. The UvrABC repair system catalyzes the recognition and processing of DNA lesions. UvrA is an ATPase and a DNA-binding protein. A damage recognition complex composed of 2 UvrA and 2 UvrB subunits scans DNA for abnormalities. When the presence of a lesion has been verified by UvrB, the UvrA molecules dissociate. This Deinococcus radiodurans (strain ATCC 13939 / DSM 20539 / JCM 16871 / CCUG 27074 / LMG 4051 / NBRC 15346 / NCIMB 9279 / VKM B-1422 / R1) protein is UvrABC system protein A.